The following is a 422-amino-acid chain: Phosphoserine aminotransferase 2, chloroplastic (422 aa).

Residues 1-50 (MAASTNSFLIGNQTQIPSLKPKSISQSFIHFTKPNTINLTTRTKSVSIRC) constitute a chloroplast transit peptide. An N-acetylalanine modification is found at Ala51. Residue Arg101 coordinates L-glutamate. Residues 135-136 (AT), Trp161, Thr211, Asp233, and Gln256 each bind pyridoxal 5'-phosphate. N6-(pyridoxal phosphate)lysine is present on Lys257. 298-299 (NT) contributes to the pyridoxal 5'-phosphate binding site.

The protein belongs to the class-V pyridoxal-phosphate-dependent aminotransferase family. SerC subfamily. Pyridoxal 5'-phosphate is required as a cofactor.

Its subcellular location is the plastid. The protein resides in the chloroplast. The catalysed reaction is O-phospho-L-serine + 2-oxoglutarate = 3-phosphooxypyruvate + L-glutamate. It carries out the reaction 4-(phosphooxy)-L-threonine + 2-oxoglutarate = (R)-3-hydroxy-2-oxo-4-phosphooxybutanoate + L-glutamate. Its pathway is amino-acid biosynthesis; L-serine biosynthesis; L-serine from 3-phospho-D-glycerate: step 2/3. In terms of biological role, involved in the plastidial phosphorylated pathway of serine biosynthesis (PPSB). Catalyzes the reversible conversion of 3-phosphohydroxypyruvate to phosphoserine. The polypeptide is Phosphoserine aminotransferase 2, chloroplastic (PSAT2) (Arabidopsis thaliana (Mouse-ear cress)).